Consider the following 263-residue polypeptide: MADILTQIVQTKTEAVTAARLRVPEAELKAMAGDRDSKRPFAENLRQVHAQGGTGIIAEIKRASPSRGIIQADLDPADCAAKYEAGGAAAISVLTDAPYFKGSLSDLKQARKACSLPVLRKEFILSDYQVYESAAAGADAVLLIVRILTQTMLSDLIGLCRALGLDTLVEIHDENDLETATNAGAKLIGINNRDLKTFKTDIAVATRLVSNFGPDQVPVAASGIGSREDIERTKAAGIYNFLIGESLVRAEDTVSFLKQLLTT.

Belongs to the TrpC family.

The catalysed reaction is 1-(2-carboxyphenylamino)-1-deoxy-D-ribulose 5-phosphate + H(+) = (1S,2R)-1-C-(indol-3-yl)glycerol 3-phosphate + CO2 + H2O. It participates in amino-acid biosynthesis; L-tryptophan biosynthesis; L-tryptophan from chorismate: step 4/5. The chain is Indole-3-glycerol phosphate synthase from Desulfosudis oleivorans (strain DSM 6200 / JCM 39069 / Hxd3) (Desulfococcus oleovorans).